Consider the following 251-residue polypeptide: Adenosylcobinamide-GDP ribazoletransferase (251 aa).

The next 5 membrane-spanning stretches (helical) occupy residues 44-64 (LVGL…LLAG), 114-134 (IGAF…VLAH), 143-163 (GALV…AACV), 177-197 (AGAT…TGVA), and 198-218 (LAGP…VVWL).

It belongs to the CobS family. Mg(2+) is required as a cofactor.

The protein resides in the cell inner membrane. It carries out the reaction alpha-ribazole + adenosylcob(III)inamide-GDP = adenosylcob(III)alamin + GMP + H(+). The catalysed reaction is alpha-ribazole 5'-phosphate + adenosylcob(III)inamide-GDP = adenosylcob(III)alamin 5'-phosphate + GMP + H(+). The protein operates within cofactor biosynthesis; adenosylcobalamin biosynthesis; adenosylcobalamin from cob(II)yrinate a,c-diamide: step 7/7. Functionally, joins adenosylcobinamide-GDP and alpha-ribazole to generate adenosylcobalamin (Ado-cobalamin). Also synthesizes adenosylcobalamin 5'-phosphate from adenosylcobinamide-GDP and alpha-ribazole 5'-phosphate. This Nitratidesulfovibrio vulgaris (strain DSM 19637 / Miyazaki F) (Desulfovibrio vulgaris) protein is Adenosylcobinamide-GDP ribazoletransferase.